We begin with the raw amino-acid sequence, 288 residues long: Small ribosomal subunit protein uS2 (288 aa).

Positions 259 to 276 are enriched in low complexity; that stretch reads EAAPAAEEAPAAEAEAAA. The segment at 259–288 is disordered; the sequence is EAAPAAEEAPAAEAEAAATDTSSESDKTEA.

The protein belongs to the universal ribosomal protein uS2 family.

In Maricaulis maris (strain MCS10) (Caulobacter maris), this protein is Small ribosomal subunit protein uS2.